Here is a 271-residue protein sequence, read N- to C-terminus: 2-dehydro-3-deoxyphosphooctonate aldolase (271 aa).

The protein belongs to the KdsA family.

The protein resides in the cytoplasm. The enzyme catalyses D-arabinose 5-phosphate + phosphoenolpyruvate + H2O = 3-deoxy-alpha-D-manno-2-octulosonate-8-phosphate + phosphate. It participates in carbohydrate biosynthesis; 3-deoxy-D-manno-octulosonate biosynthesis; 3-deoxy-D-manno-octulosonate from D-ribulose 5-phosphate: step 2/3. It functions in the pathway bacterial outer membrane biogenesis; lipopolysaccharide biosynthesis. In Campylobacter jejuni subsp. jejuni serotype O:6 (strain 81116 / NCTC 11828), this protein is 2-dehydro-3-deoxyphosphooctonate aldolase.